The chain runs to 356 residues: Phosphate acyltransferase (356 aa).

The protein belongs to the PlsX family. As to quaternary structure, homodimer. Probably interacts with PlsY.

It is found in the cytoplasm. The catalysed reaction is a fatty acyl-[ACP] + phosphate = an acyl phosphate + holo-[ACP]. It participates in lipid metabolism; phospholipid metabolism. Catalyzes the reversible formation of acyl-phosphate (acyl-PO(4)) from acyl-[acyl-carrier-protein] (acyl-ACP). This enzyme utilizes acyl-ACP as fatty acyl donor, but not acyl-CoA. The chain is Phosphate acyltransferase from Mesorhizobium japonicum (strain LMG 29417 / CECT 9101 / MAFF 303099) (Mesorhizobium loti (strain MAFF 303099)).